A 253-amino-acid chain; its full sequence is Ubiquinone/menaquinone biosynthesis C-methyltransferase UbiE (253 aa).

Residues T76, D97, and 125–126 (NA) contribute to the S-adenosyl-L-methionine site.

This sequence belongs to the class I-like SAM-binding methyltransferase superfamily. MenG/UbiE family.

The catalysed reaction is a 2-demethylmenaquinol + S-adenosyl-L-methionine = a menaquinol + S-adenosyl-L-homocysteine + H(+). The enzyme catalyses a 2-methoxy-6-(all-trans-polyprenyl)benzene-1,4-diol + S-adenosyl-L-methionine = a 5-methoxy-2-methyl-3-(all-trans-polyprenyl)benzene-1,4-diol + S-adenosyl-L-homocysteine + H(+). It functions in the pathway quinol/quinone metabolism; menaquinone biosynthesis; menaquinol from 1,4-dihydroxy-2-naphthoate: step 2/2. The protein operates within cofactor biosynthesis; ubiquinone biosynthesis. Its function is as follows. Methyltransferase required for the conversion of demethylmenaquinol (DMKH2) to menaquinol (MKH2) and the conversion of 2-polyprenyl-6-methoxy-1,4-benzoquinol (DDMQH2) to 2-polyprenyl-3-methyl-6-methoxy-1,4-benzoquinol (DMQH2). The polypeptide is Ubiquinone/menaquinone biosynthesis C-methyltransferase UbiE (Rhodopseudomonas palustris (strain ATCC BAA-98 / CGA009)).